A 623-amino-acid chain; its full sequence is MPAFYGGKLTTFEDDEKESEYGYVRKVSGPVVVADGMAGAAMYELVRVGHDNLIGEIIRLEGDSATIQVYEETAGLTVNDPVLRTHKPLSVELGPGILGNIFDGIQRPLKTIARISGDVYIPRGVSVPALDKDCLWEFQPNKFVEGDTITGGDLYATVFENTLMNHLVALPPDAMGKITYIAPAGQYSLKDTVIELEFQGIKKSYTMLQSWPVRTPRPVASKLAADTPLLTGQRVLDALFPSVLGGTCAIPGAFGCGKTVISQALSKYSNSDAVVYVGCGERGNEMAEVLMDFPQLTMTLPDGREESVMKRTTLVANTSNMPVAAREASIYTGITIAEYFRDMGYNVSMMADSTSRWAEALREISGRLAEMPADSGYPAYLAARLASFYERAGKVKCLGGPERNGSVTIVGAVSPPGGDFSDPVTSATLSIVQVFWGLDKKLAQRKHFPSVNWLISYSKYSTALESFYEKFDPDFINIRTKAREVLQREDDLNEIVQLVGKDALAEGDKITLETAKLLREDYLAQNAFTPYDKFCPFYKSVWMMRNIIHFYNLANQAVERAAGMDGQKITYTLIKHRLGDLFYRLVSQKFEDPAEGEDTLVEKFKKLYDDLNAGFRALEDETR.

252–259 (GAFGCGKT) provides a ligand contact to ATP.

It belongs to the ATPase alpha/beta chains family. In terms of assembly, V-ATPase is a heteromultimeric enzyme composed of a peripheral catalytic V1 complex (components A to H) attached to an integral membrane V0 proton pore complex (components: a, c, c'', d and e). Binds to the deubiquitinating enzyme AMSH3.

Its subcellular location is the vacuole membrane. The enzyme catalyses ATP + H2O + 4 H(+)(in) = ADP + phosphate + 5 H(+)(out). Its function is as follows. Catalytic subunit of the peripheral V1 complex of vacuolar ATPase. V-ATPase vacuolar ATPase is responsible for acidifying a variety of intracellular compartments in eukaryotic cells. The chain is V-type proton ATPase catalytic subunit A (VHA-A) from Arabidopsis thaliana (Mouse-ear cress).